An 83-amino-acid chain; its full sequence is UPF0147 protein TK2131 (83 aa).

This sequence belongs to the UPF0147 family.

This chain is UPF0147 protein TK2131, found in Thermococcus kodakarensis (strain ATCC BAA-918 / JCM 12380 / KOD1) (Pyrococcus kodakaraensis (strain KOD1)).